The following is a 198-amino-acid chain: MHSEAEESKEVATDVFNSKNLAVQAQKKILGKMVSKSIATTLIDDTSSEVLDELYRVTREYTQNKKEAEKIIKNLIKTVIKLAILYRNNQFNQDELALMEKFKKKVHQLAMTVVSFHQVDYTFDRNVLSRLLNECREMLHQIIRRHLTAKSHGRVNNVFDHFSDCDFLAALYNPFGNFKPHLQKLCDGINKMLDEENI.

Residues 49–83 adopt a coiled-coil conformation; it reads EVLDELYRVTREYTQNKKEAEKIIKNLIKTVIKLA.

This sequence belongs to the TNFAIP8 family.

Its subcellular location is the cytoplasm. Its function is as follows. Acts as a negative mediator of apoptosis. Suppresses the TNF-mediated apoptosis by inhibiting caspase-8 activity but not the processing of procaspase-8, subsequently resulting in inhibition of BID cleavage and caspase-3 activation. The protein is Tumor necrosis factor alpha-induced protein 8 (TNFAIP8) of Pongo abelii (Sumatran orangutan).